A 527-amino-acid polypeptide reads, in one-letter code: Peptide chain release factor 3 (527 aa).

Residues 9–277 form the tr-type G domain; the sequence is AKRRTFAIIS…AVVDWAPRPL (269 aa). GTP contacts are provided by residues 18-25, 86-90, and 140-143; these read SHPDAGKT, DTPGH, and NKLD.

This sequence belongs to the TRAFAC class translation factor GTPase superfamily. Classic translation factor GTPase family. PrfC subfamily.

The protein localises to the cytoplasm. Increases the formation of ribosomal termination complexes and stimulates activities of RF-1 and RF-2. It binds guanine nucleotides and has strong preference for UGA stop codons. It may interact directly with the ribosome. The stimulation of RF-1 and RF-2 is significantly reduced by GTP and GDP, but not by GMP. This Pseudomonas entomophila (strain L48) protein is Peptide chain release factor 3.